A 136-amino-acid polypeptide reads, in one-letter code: Small ribosomal subunit protein uS8c (136 aa).

Belongs to the universal ribosomal protein uS8 family. As to quaternary structure, part of the 30S ribosomal subunit.

It localises to the plastid. It is found in the chloroplast. Its function is as follows. One of the primary rRNA binding proteins, it binds directly to 16S rRNA central domain where it helps coordinate assembly of the platform of the 30S subunit. The chain is Small ribosomal subunit protein uS8c (rps8) from Saccharum hybrid (Sugarcane).